Reading from the N-terminus, the 413-residue chain is Divalent metal cation transporter MntH (413 aa).

Transmembrane regions (helical) follow at residues Phe19 to Ala39, Gly49 to Met69, Val94 to Ile114, Leu122 to Ile142, Leu155 to Ser175, Ala196 to His216, Val240 to Ala260, Ala287 to Gly307, Ile323 to Gly343, Ile349 to Leu369, and Leu393 to Leu413.

Belongs to the NRAMP family.

It is found in the cell inner membrane. In terms of biological role, h(+)-stimulated, divalent metal cation uptake system. In Erwinia tasmaniensis (strain DSM 17950 / CFBP 7177 / CIP 109463 / NCPPB 4357 / Et1/99), this protein is Divalent metal cation transporter MntH.